Reading from the N-terminus, the 204-residue chain is WW domain-containing protein C11B10.08 (204 aa).

Residues 7–43 enclose the WW domain; that stretch reads EGLPNGWVAQWDERYKCYFYVNESDPKAKPQWECPVR. Residues 32–117 are disordered; it reads PKAKPQWECP…GYPQQPYYYP (86 aa). Low complexity-rich tracts occupy residues 66–100 and 108–117; these read YSNSAAPATPAASASSAAPAPAPAASQNRAYGAAP and GYPQQPYYYP.

The protein resides in the cytoplasm. It is found in the nucleus. This is WW domain-containing protein C11B10.08 from Schizosaccharomyces pombe (strain 972 / ATCC 24843) (Fission yeast).